The primary structure comprises 302 residues: NAD kinase 2 (302 aa).

Asp-78 functions as the Proton acceptor in the catalytic mechanism. NAD(+) is bound by residues 78–79 (DG), 152–153 (NE), Asp-182, 193–198 (TAYALS), and Ala-217.

The protein belongs to the NAD kinase family. It depends on a divalent metal cation as a cofactor.

It is found in the cytoplasm. The enzyme catalyses NAD(+) + ATP = ADP + NADP(+) + H(+). In terms of biological role, involved in the regulation of the intracellular balance of NAD and NADP, and is a key enzyme in the biosynthesis of NADP. Catalyzes specifically the phosphorylation on 2'-hydroxyl of the adenosine moiety of NAD to yield NADP. The chain is NAD kinase 2 from Prochlorococcus marinus (strain MIT 9313).